The following is a 162-amino-acid chain: NADH-quinone oxidoreductase subunit C (162 aa).

This sequence belongs to the complex I 30 kDa subunit family. NDH-1 is composed of 14 different subunits. Subunits NuoB, C, D, E, F, and G constitute the peripheral sector of the complex.

It is found in the cell inner membrane. It catalyses the reaction a quinone + NADH + 5 H(+)(in) = a quinol + NAD(+) + 4 H(+)(out). Functionally, NDH-1 shuttles electrons from NADH, via FMN and iron-sulfur (Fe-S) centers, to quinones in the respiratory chain. The immediate electron acceptor for the enzyme in this species is believed to be ubiquinone. Couples the redox reaction to proton translocation (for every two electrons transferred, four hydrogen ions are translocated across the cytoplasmic membrane), and thus conserves the redox energy in a proton gradient. In Geobacter metallireducens (strain ATCC 53774 / DSM 7210 / GS-15), this protein is NADH-quinone oxidoreductase subunit C.